An 87-amino-acid polypeptide reads, in one-letter code: Protein anon-73B1 (87 aa).

The chain crosses the membrane as a helical span at residues 25-47 (LLIRYGLYVGALFQFVCISAAVL). Positions 52-87 (PDVNSNPETGEVTEREGEPVRTRLHKIRKLEKKKRR) are disordered. A compositionally biased stretch (basic and acidic residues) spans 63–72 (VTEREGEPVR). Residues 73–87 (TRLHKIRKLEKKKRR) are compositionally biased toward basic residues.

Belongs to the UPF0239 family.

The protein localises to the membrane. This Drosophila erecta (Fruit fly) protein is Protein anon-73B1.